A 274-amino-acid chain; its full sequence is uncharacterized protein (274 aa).

A signal peptide spans 1-17; sequence MKKLLAGFLTLSLALAA. Residue Cys18 is the site of N-palmitoyl cysteine attachment. Cys18 is lipidated: S-diacylglycerol cysteine. The disordered stretch occupies residues 18-169; sequence CSNGSDDDSS…DANNGASSAN (152 aa). Over residues 25–76 the composition is skewed to basic and acidic residues; the sequence is DSSKKDDSSKDNQSSDDKSKDSKNDDKKNNDSDKDKDNNSDSDKNSDSKSDD. Residues 91 to 169 show a composition bias toward low complexity; that stretch reads SDNASGSDSS…DANNGASSAN (79 aa).

Its subcellular location is the cell membrane. This is an uncharacterized protein from Staphylococcus saprophyticus subsp. saprophyticus (strain ATCC 15305 / DSM 20229 / NCIMB 8711 / NCTC 7292 / S-41).